We begin with the raw amino-acid sequence, 218 residues long: Keratin-associated protein 10-8 (218 aa).

The tract at residues 26-202 (CGNQVSSPSA…FCQPSCCHPA (177 aa)) is 16 X 5 AA repeats of C-C-X(3). 16 consecutive repeat copies span residues 50–54 (CCEPT), 55–59 (CCAPS), 60–64 (CCAPA), 86–90 (CSSSS), 96–100 (CCVPV), 101–105 (CCRPV), 111–115 (CCRPV), 121–125 (CCTPV), 131–135 (CCRPV), 136–140 (CCRPV), 141–145 (CCRPV), 151–155 (CCRPM), 161–167 (PCSAPSS), 168–172 (CCRPS), 187–191 (CCVPT), and 198–202 (CCHPA).

The protein belongs to the KRTAP type 10 family. As to quaternary structure, interacts with hair keratins.

In the hair cortex, hair keratin intermediate filaments are embedded in an interfilamentous matrix, consisting of hair keratin-associated proteins (KRTAP), which are essential for the formation of a rigid and resistant hair shaft through their extensive disulfide bond cross-linking with abundant cysteine residues of hair keratins. The matrix proteins include the high-sulfur and high-glycine-tyrosine keratins. This is Keratin-associated protein 10-8 from Bos taurus (Bovine).